Reading from the N-terminus, the 97-residue chain is Citrate lyase acyl carrier protein (97 aa).

Residue S14 is modified to O-(phosphoribosyl dephospho-coenzyme A)serine.

Belongs to the CitD family. As to quaternary structure, oligomer with a subunit composition of (alpha,beta,gamma)6.

The protein resides in the cytoplasm. Covalent carrier of the coenzyme of citrate lyase. The polypeptide is Citrate lyase acyl carrier protein (Oenococcus oeni (strain ATCC BAA-331 / PSU-1)).